The primary structure comprises 100 residues: Noncompact myelin-associated protein (100 aa).

The Extracellular portion of the chain corresponds to 1-28; that stretch reads MTTATTLGDAVFSLNMTRGEDALYKSSG. The helical transmembrane segment at 29-49 threads the bilayer; that stretch reads AIVAAIVVVVIIIVTLVLILL. Over 50–100 the chain is Cytoplasmic; the sequence is KMYNRRMRTRRELEPKSPKPPVPPALDPSSNGSQQPATVTFDPANVHVETR. Residues 58 to 100 form a disordered region; it reads TRRELEPKSPKPPVPPALDPSSNGSQQPATVTFDPANVHVETR.

Glycosylated. In terms of tissue distribution, found in the peripheral nervous system (PNS) Schwann cells (at protein level). Expressed in the PNS, primarily limited to Schwann cells.

It localises to the cell membrane. In terms of biological role, plays a role in myelin formation. This chain is Noncompact myelin-associated protein (Ncmap), found in Mus musculus (Mouse).